Reading from the N-terminus, the 1431-residue chain is Protein CFT1 (1431 aa).

The interval 721–759 is disordered; that stretch reads EPSKSESSEPISHQIDSENKPNITNGINGTTARSARQTQ. Residues 740 to 759 are compositionally biased toward polar residues; it reads KPNITNGINGTTARSARQTQ.

Belongs to the CFT1 family.

It is found in the nucleus. Functionally, RNA-binding component of the cleavage and polyadenylation factor (CPF) complex, which plays a key role in polyadenylation-dependent pre-mRNA 3'-end formation and cooperates with cleavage factors including the CFIA complex and NAB4/CFIB. Involved in poly(A) site recognition. May be involved in coupling transcription termination and mRNA 3'-end formation. This chain is Protein CFT1 (CFT1), found in Cryptococcus neoformans var. neoformans serotype D (strain B-3501A) (Filobasidiella neoformans).